Here is a 269-residue protein sequence, read N- to C-terminus: Aminoglycoside (3'') (9) adenylyltransferase (269 aa).

The enzyme catalyses streptomycin + ATP = 3''-O-adenylylstreptomycin + diphosphate. It catalyses the reaction spectinomycin + ATP = 9-O-adenylylspectinomycin + diphosphate. Functionally, mediates bacterial resistance to the antibiotic spectinomycin and probably also to streptomycin. The chain is Aminoglycoside (3'') (9) adenylyltransferase from Rhizobium radiobacter (Agrobacterium tumefaciens).